A 324-amino-acid polypeptide reads, in one-letter code: Glyoxylate/hydroxypyruvate reductase B (324 aa).

Active-site residues include R237 and E266. H285 (proton donor) is an active-site residue.

The protein belongs to the D-isomer specific 2-hydroxyacid dehydrogenase family. GhrB subfamily. As to quaternary structure, homodimer.

It is found in the cytoplasm. The catalysed reaction is glycolate + NADP(+) = glyoxylate + NADPH + H(+). The enzyme catalyses (R)-glycerate + NAD(+) = 3-hydroxypyruvate + NADH + H(+). It catalyses the reaction (R)-glycerate + NADP(+) = 3-hydroxypyruvate + NADPH + H(+). Functionally, catalyzes the NADPH-dependent reduction of glyoxylate and hydroxypyruvate into glycolate and glycerate, respectively. This Escherichia fergusonii (strain ATCC 35469 / DSM 13698 / CCUG 18766 / IAM 14443 / JCM 21226 / LMG 7866 / NBRC 102419 / NCTC 12128 / CDC 0568-73) protein is Glyoxylate/hydroxypyruvate reductase B.